The primary structure comprises 222 residues: Putative N-acetylmannosamine-6-phosphate 2-epimerase (222 aa).

It belongs to the NanE family.

It carries out the reaction an N-acyl-D-glucosamine 6-phosphate = an N-acyl-D-mannosamine 6-phosphate. The protein operates within amino-sugar metabolism; N-acetylneuraminate degradation; D-fructose 6-phosphate from N-acetylneuraminate: step 3/5. Converts N-acetylmannosamine-6-phosphate (ManNAc-6-P) to N-acetylglucosamine-6-phosphate (GlcNAc-6-P). The chain is Putative N-acetylmannosamine-6-phosphate 2-epimerase from Staphylococcus aureus (strain bovine RF122 / ET3-1).